The following is a 616-amino-acid chain: FNIP repeat-containing protein DDB_G0290639 (616 aa).

The stretch at 239–274 (FENNNNNNNNNNNNNNNNNNNNNNNNNNNNNKKTEK) forms a coiled coil. Residues 241 to 269 (NNNNNNNNNNNNNNNNNNNNNNNNNNNNN) are compositionally biased toward low complexity. The disordered stretch occupies residues 241 to 270 (NNNNNNNNNNNNNNNNNNNNNNNNNNNNNK). FNIP repeat units follow at residues 337–379 (FEES…FNDG), 380–421 (FNQS…KLCN), 423–464 (FSQP…VFYD), 466–508 (FNQL…FSDG), 509–550 (FNQT…LIDS), and 552–593 (FQQP…ILDK).

The sequence is that of FNIP repeat-containing protein DDB_G0290639 from Dictyostelium discoideum (Social amoeba).